The chain runs to 624 residues: Kelch-like protein diablo (624 aa).

Residues 1–55 (MGDPLLPGSTGLGSGSATAATGGSVTAGSGLGNGGTGGAERPPSPARLTHTSEKH) are disordered. The segment covering 15–28 (GSATAATGGSVTAG) has biased composition (low complexity). The span at 29–38 (SGLGNGGTGG) shows a compositional bias: gly residues. The 68-residue stretch at 73 to 140 (CDVVLNVGGR…CYTAHIIVEE (68 aa)) folds into the BTB domain. One can recognise a BACK domain in the interval 175 to 277 (CLGIRAFADT…SPKFLVGTVG (103 aa)). Kelch repeat units follow at residues 324-370 (VLFA…VLND), 372-418 (LYAV…VLDG), 419-465 (FLYA…VLSG), 467-512 (LYAI…VFNN), 514-559 (IYAV…VVNG), and 560-606 (QLYA…VMRA).

It functions in the pathway protein modification; protein ubiquitination. Functionally, probable substrate-specific adapter of an E3 ubiquitin-protein ligase complex which mediates the ubiquitination and subsequent proteasomal degradation of target proteins. May have a role in synapse differentiation and growth. This Drosophila grimshawi (Hawaiian fruit fly) protein is Kelch-like protein diablo.